The sequence spans 238 residues: Bacterial microcompartment shell protein PduB (238 aa).

BMC circularly permuted domains lie at 14–125 (FVGA…VYNA) and 126–225 (KAGH…LSQF). Cysteines 158 and 197 form a disulfide.

It belongs to the EutL/PduB family. In terms of assembly, homotrimerizes to form a pseudohexamer with a central pore 7.5 Angstroms wide and 22 Angstroms long; the pore channel in the crystal binds up to 4 glycerol molecules. A disulfide bond forms in the pore, it is not clear if this is an artifact. The trimers pack into an array.

It is found in the bacterial microcompartment. It participates in polyol metabolism; 1,2-propanediol degradation. Functionally, one of the major shell proteins of the bacterial microcompartment (BMC) dedicated to 1,2-propanediol (1,2-PD) degradation. Probably involved in a propanediol fermentation/reuterin formation pathway. The protein is Bacterial microcompartment shell protein PduB of Limosilactobacillus reuteri (strain DSM 20016) (Lactobacillus reuteri).